The primary structure comprises 201 residues: NADH-quinone oxidoreductase subunit C (201 aa).

It belongs to the complex I 30 kDa subunit family. As to quaternary structure, NDH-1 is composed of 14 different subunits. Subunits NuoB, C, D, E, F, and G constitute the peripheral sector of the complex.

It is found in the cell inner membrane. The enzyme catalyses a quinone + NADH + 5 H(+)(in) = a quinol + NAD(+) + 4 H(+)(out). In terms of biological role, NDH-1 shuttles electrons from NADH, via FMN and iron-sulfur (Fe-S) centers, to quinones in the respiratory chain. The immediate electron acceptor for the enzyme in this species is believed to be ubiquinone. Couples the redox reaction to proton translocation (for every two electrons transferred, four hydrogen ions are translocated across the cytoplasmic membrane), and thus conserves the redox energy in a proton gradient. The polypeptide is NADH-quinone oxidoreductase subunit C (Sinorhizobium medicae (strain WSM419) (Ensifer medicae)).